The primary structure comprises 356 residues: UDP-3-O-acylglucosamine N-acyltransferase (356 aa).

Catalysis depends on His242, which acts as the Proton acceptor.

The protein belongs to the transferase hexapeptide repeat family. LpxD subfamily. In terms of assembly, homotrimer.

It catalyses the reaction a UDP-3-O-[(3R)-3-hydroxyacyl]-alpha-D-glucosamine + a (3R)-hydroxyacyl-[ACP] = a UDP-2-N,3-O-bis[(3R)-3-hydroxyacyl]-alpha-D-glucosamine + holo-[ACP] + H(+). The protein operates within bacterial outer membrane biogenesis; LPS lipid A biosynthesis. Functionally, catalyzes the N-acylation of UDP-3-O-acylglucosamine using 3-hydroxyacyl-ACP as the acyl donor. Is involved in the biosynthesis of lipid A, a phosphorylated glycolipid that anchors the lipopolysaccharide to the outer membrane of the cell. This is UDP-3-O-acylglucosamine N-acyltransferase from Acinetobacter baumannii (strain AB0057).